The following is a 354-amino-acid chain: Probable L-ascorbate-6-phosphate lactonase UlaG (354 aa).

It belongs to the UlaG family. The cofactor is a divalent metal cation.

It is found in the cytoplasm. It carries out the reaction L-ascorbate 6-phosphate + H2O = 3-dehydro-L-gulonate 6-phosphate. The protein operates within cofactor degradation; L-ascorbate degradation; D-xylulose 5-phosphate from L-ascorbate: step 1/4. In terms of biological role, probably catalyzes the hydrolysis of L-ascorbate-6-P into 3-keto-L-gulonate-6-P. Is essential for L-ascorbate utilization under anaerobic conditions. The chain is Probable L-ascorbate-6-phosphate lactonase UlaG from Shigella dysenteriae serotype 1 (strain Sd197).